Consider the following 407-residue polypeptide: Phosphopentomutase (407 aa).

6 residues coordinate Mn(2+): Asp10, Asp306, His311, Asp347, His348, and His359.

The protein belongs to the phosphopentomutase family. It depends on Mn(2+) as a cofactor.

It is found in the cytoplasm. It carries out the reaction 2-deoxy-alpha-D-ribose 1-phosphate = 2-deoxy-D-ribose 5-phosphate. It catalyses the reaction alpha-D-ribose 1-phosphate = D-ribose 5-phosphate. It participates in carbohydrate degradation; 2-deoxy-D-ribose 1-phosphate degradation; D-glyceraldehyde 3-phosphate and acetaldehyde from 2-deoxy-alpha-D-ribose 1-phosphate: step 1/2. Isomerase that catalyzes the conversion of deoxy-ribose 1-phosphate (dRib-1-P) and ribose 1-phosphate (Rib-1-P) to deoxy-ribose 5-phosphate (dRib-5-P) and ribose 5-phosphate (Rib-5-P), respectively. This chain is Phosphopentomutase, found in Sodalis glossinidius (strain morsitans).